Consider the following 350-residue polypeptide: Dihydroorotate dehydrogenase (quinone) (350 aa).

FMN is bound by residues 67-71 (AGFDK) and G91. A substrate-binding site is contributed by K71. Residue 116–120 (NRMGF) participates in substrate binding. N144 and N177 together coordinate FMN. N177 contributes to the substrate binding site. S180 acts as the Nucleophile in catalysis. A substrate-binding site is contributed by N182. K213 and T241 together coordinate FMN. Position 242 to 243 (242 to 243 (NT)) interacts with substrate. Residues 249 to 268 (ASLHSDAADEEGGLSGAPIT) are disordered. Residues G264, G291, and 312–313 (YT) each bind FMN.

The protein belongs to the dihydroorotate dehydrogenase family. Type 2 subfamily. Monomer. The cofactor is FMN.

The protein localises to the cell membrane. It carries out the reaction (S)-dihydroorotate + a quinone = orotate + a quinol. Its pathway is pyrimidine metabolism; UMP biosynthesis via de novo pathway; orotate from (S)-dihydroorotate (quinone route): step 1/1. Functionally, catalyzes the conversion of dihydroorotate to orotate with quinone as electron acceptor. The sequence is that of Dihydroorotate dehydrogenase (quinone) from Natronomonas pharaonis (strain ATCC 35678 / DSM 2160 / CIP 103997 / JCM 8858 / NBRC 14720 / NCIMB 2260 / Gabara) (Halobacterium pharaonis).